The following is an 895-amino-acid chain: Catenin alpha-3 (895 aa).

The residue at position 56 (serine 56) is a Phosphoserine. The stretch at 74-111 (EKIAQEATVLKDELTASLEEVRKESEALKVSAERFTDD) forms a coiled coil. The residue at position 160 (serine 160) is a Phosphoserine. Residues 325–379 (RERIIAECNAIRQALQDLLSEYMNNAGKKERSNTLNIALDNMCKKTRDLRRQLRK) adopt a coiled-coil conformation. 2 positions are modified to phosphoserine: serine 637 and serine 647. Threonine 649 bears the Phosphothreonine mark.

Belongs to the vinculin/alpha-catenin family. As to quaternary structure, interacts with CTNNB1. Interacts with PKP2. As to expression, predominantly expressed in heart and testis. Expressed at lower levels in brain, kidney, liver and skeletal muscle.

Its subcellular location is the cytoplasm. The protein resides in the cytoskeleton. The protein localises to the cell junction. It localises to the desmosome. In terms of biological role, may be involved in formation of stretch-resistant cell-cell adhesion complexes. This chain is Catenin alpha-3, found in Homo sapiens (Human).